Here is a 1539-residue protein sequence, read N- to C-terminus: Lysine-specific demethylase 5D (1539 aa).

The JmjN domain occupies 14–55 (CPVFEPSWAEFQDPLGYIAKIRPIAEKSGICKIRPPADWQPP). In terms of domain architecture, ARID spans 79–169 (TRVKLNYLDQ…IIYPYEMFQS (91 aa)). The disordered stretch occupies residues 192 to 228 (PHSIPLRQSVQPSKFSSYSRRAKRLQPDPEPTEEDIE). The segment covering 197-210 (LRQSVQPSKFSSYS) has biased composition (polar residues). Residues Lys205, Lys229, Lys244, and Lys272 each participate in a glycyl lysine isopeptide (Lys-Gly) (interchain with G-Cter in SUMO2) cross-link. Residues Ser291 and Ser307 each carry the phosphoserine modification. The segment at 316-362 (ICQVCSRGDEDDKLLFCDGCDDNYHIFCLLPPLPEIPRGIWRCPKCI) adopts a PHD-type 1 zinc-finger fold. Residue Tyr430 coordinates 2-oxoglutarate. The JmjC domain occupies 458–624 (EYATSGWNLN…AGRQCIEHYR (167 aa)). The Fe cation site is built by His504 and Glu506. 2-oxoglutarate-binding residues include Ser512, Asn514, and Lys522. His592 contributes to the Fe cation binding site. The C5HC2 zinc-finger motif lies at 697–749 (CIKCKTTCFLSALACYDCPDGLVCLSHINDLCKCSSSRQYLRYRYTLDELPTM). At Ser884 the chain carries Phosphoserine. The segment at 1174–1235 (ICVCGQVPAG…DTKFLCPLCM (62 aa)) adopts a PHD-type 2 zinc-finger fold. Position 1346 is a phosphoserine (Ser1346). Positions 1429 to 1521 (HQGSRTRSRA…QHKDSGSSAA (93 aa)) are disordered. A compositionally biased stretch (basic residues) spans 1432–1446 (SRTRSRALERRRRRQ). Over residues 1477-1491 (GREEEHYQEKADREN) the composition is skewed to basic and acidic residues. The segment covering 1494-1521 (LTPSTDHSPFLKGNQNSLQHKDSGSSAA) has biased composition (polar residues).

This sequence belongs to the JARID1 histone demethylase family. Interacts with PCGF6, MSH5, ZMYND8, AR. L-ascorbate is required as a cofactor. Requires Fe(2+) as cofactor. In terms of tissue distribution, expression is highly down-regulated in metastatic prostate tumors.

The protein resides in the nucleus. It catalyses the reaction N(6),N(6),N(6)-trimethyl-L-lysyl(4)-[histone H3] + 3 2-oxoglutarate + 3 O2 = L-lysyl(4)-[histone H3] + 3 formaldehyde + 3 succinate + 3 CO2. Its function is as follows. Histone demethylase that specifically demethylates 'Lys-4' of histone H3, thereby playing a central role in histone code. Does not demethylate histone H3 'Lys-9', H3 'Lys-27', H3 'Lys-36', H3 'Lys-79' or H4 'Lys-20'. Demethylates trimethylated and dimethylated but not monomethylated H3 'Lys-4'. May play a role in spermatogenesis. Involved in transcriptional repression of diverse metastasis-associated genes; in this function seems to cooperate with ZMYND8. Suppresses prostate cancer cell invasion. Regulates androgen receptor (AR) transcriptional activity by demethylating H3K4me3 active transcription marks. The sequence is that of Lysine-specific demethylase 5D (KDM5D) from Homo sapiens (Human).